The following is a 413-amino-acid chain: Phosphopentomutase (413 aa).

Residues Asp11, Asp306, His311, Asp347, His348, and His359 each contribute to the Mn(2+) site.

The protein belongs to the phosphopentomutase family. The cofactor is Mn(2+).

It is found in the cytoplasm. The enzyme catalyses 2-deoxy-alpha-D-ribose 1-phosphate = 2-deoxy-D-ribose 5-phosphate. It carries out the reaction alpha-D-ribose 1-phosphate = D-ribose 5-phosphate. It functions in the pathway carbohydrate degradation; 2-deoxy-D-ribose 1-phosphate degradation; D-glyceraldehyde 3-phosphate and acetaldehyde from 2-deoxy-alpha-D-ribose 1-phosphate: step 1/2. Isomerase that catalyzes the conversion of deoxy-ribose 1-phosphate (dRib-1-P) and ribose 1-phosphate (Rib-1-P) to deoxy-ribose 5-phosphate (dRib-5-P) and ribose 5-phosphate (Rib-5-P), respectively. This is Phosphopentomutase from Helicobacter pylori (strain HPAG1).